The primary structure comprises 804 residues: Leucine--tRNA ligase (804 aa).

The 'HIGH' region signature appears at 39-50 (PFPSGKGLHVGH). A 'KMSKS' region motif is present at residues 573-577 (KMSKS). Lys-576 is an ATP binding site.

The protein belongs to the class-I aminoacyl-tRNA synthetase family.

It localises to the cytoplasm. It catalyses the reaction tRNA(Leu) + L-leucine + ATP = L-leucyl-tRNA(Leu) + AMP + diphosphate. This chain is Leucine--tRNA ligase, found in Lactobacillus johnsonii (strain CNCM I-12250 / La1 / NCC 533).